A 51-amino-acid polypeptide reads, in one-letter code: Sperm protamine P1 (51 aa).

Belongs to the protamine P1 family. As to quaternary structure, cross-linked by interchain disulfide bonds around the DNA-helix. As to expression, testis.

Its subcellular location is the nucleus. The protein resides in the chromosome. Protamines substitute for histones in the chromatin of sperm during the haploid phase of spermatogenesis. They compact sperm DNA into a highly condensed, stable and inactive complex. In Hylobates lar (Lar gibbon), this protein is Sperm protamine P1 (PRM1).